A 142-amino-acid chain; its full sequence is Large ribosomal subunit protein uL13 (142 aa).

It belongs to the universal ribosomal protein uL13 family. Part of the 50S ribosomal subunit.

In terms of biological role, this protein is one of the early assembly proteins of the 50S ribosomal subunit, although it is not seen to bind rRNA by itself. It is important during the early stages of 50S assembly. In Janthinobacterium sp. (strain Marseille) (Minibacterium massiliensis), this protein is Large ribosomal subunit protein uL13.